A 302-amino-acid chain; its full sequence is 1,2-dihydroxynaphthalene dioxygenase (302 aa).

2 VOC domains span residues 9–124 (ELGY…IFWG) and 149–270 (GLGH…PGWR). H152 provides a ligand contact to Fe cation. Residues H152, 199–200 (DH), H215, and Y256 contribute to the substrate site. H215 lines the Fe cation pocket. E266 lines the Fe cation pocket.

Belongs to the extradiol ring-cleavage dioxygenase family. It depends on Fe(2+) as a cofactor.

It carries out the reaction naphthalene-1,2-diol + O2 = 2-hydroxychromene-2-carboxylate + H(+). It functions in the pathway aromatic compound metabolism; naphthalene degradation. In terms of biological role, involved in the naphthalene catabolic pathway. Catalyzes the meta-cleavage of 1,2-dihydroxynaphthalene (1,2-DHN) to yield 2-hydroxychromene-2-carboxylic acid. The protein is 1,2-dihydroxynaphthalene dioxygenase (nahC) of Pseudomonas putida (Arthrobacter siderocapsulatus).